The sequence spans 133 residues: ATP synthase epsilon chain, chloroplastic (133 aa).

Belongs to the ATPase epsilon chain family. F-type ATPases have 2 components, CF(1) - the catalytic core - and CF(0) - the membrane proton channel. CF(1) has five subunits: alpha(3), beta(3), gamma(1), delta(1), epsilon(1). CF(0) has three main subunits: a, b and c.

Its subcellular location is the plastid. It localises to the chloroplast thylakoid membrane. Its function is as follows. Produces ATP from ADP in the presence of a proton gradient across the membrane. In Thalassiosira pseudonana (Marine diatom), this protein is ATP synthase epsilon chain, chloroplastic.